The following is a 327-amino-acid chain: Phenylalanine--tRNA ligase alpha subunit (327 aa).

Glutamate 252 is a Mg(2+) binding site.

Belongs to the class-II aminoacyl-tRNA synthetase family. Phe-tRNA synthetase alpha subunit type 1 subfamily. Tetramer of two alpha and two beta subunits. The cofactor is Mg(2+).

The protein resides in the cytoplasm. The enzyme catalyses tRNA(Phe) + L-phenylalanine + ATP = L-phenylalanyl-tRNA(Phe) + AMP + diphosphate + H(+). This is Phenylalanine--tRNA ligase alpha subunit from Hamiltonella defensa subsp. Acyrthosiphon pisum (strain 5AT).